We begin with the raw amino-acid sequence, 104 residues long: Endogenous retrovirus group K member 21 Rec protein (104 aa).

Residues 1–48 (MHPSEMQRKAPPRRRRHRNRAPLTHKMNKMVTSEQMKLPSTKKAEPPT) form a disordered region. Residues 10–20 (APPRRRRHRNR) show a composition bias toward basic residues. The Nuclear localization signal motif lies at 13–20 (RRRRHRNR). Positions 49-58 (WAQLKKLTQL) match the Nuclear export signal motif.

In terms of assembly, forms homodimers, homotrimers, and homotetramers via a C-terminal domain. Associates with XPO1 and with ZNF145.

It is found in the cytoplasm. The protein resides in the nucleus. It localises to the nucleolus. Retroviral replication requires the nuclear export and translation of unspliced, singly-spliced and multiply-spliced derivatives of the initial genomic transcript. Rec interacts with a highly structured RNA element (RcRE) present in the viral 3'LTR and recruits the cellular nuclear export machinery. This permits export to the cytoplasm of unspliced genomic or incompletely spliced subgenomic viral transcripts. The sequence is that of Endogenous retrovirus group K member 21 Rec protein (ERVK-21) from Homo sapiens (Human).